The primary structure comprises 104 residues: Thioredoxin 1 (104 aa).

One can recognise a Thioredoxin domain in the interval 2–104; the sequence is VKIVTSQAEF…LKQLIEKYAA (103 aa). Catalysis depends on nucleophile residues Cys30 and Cys33. Cysteines 30 and 33 form a disulfide.

It belongs to the thioredoxin family. The disulfide bond between Cys-30 and Cys-33 acts as a redox-active center and is reduced by thioredoxin reductase TRXR.

Its subcellular location is the cytoplasm. Participates in various redox reactions through the reversible oxidation of its active center dithiol to a disulfide and catalyzes dithiol-disulfide exchange reactions. By modifying the redox status of targeted proteins, induces changes in their structure and activity. Reduces oxidized glutathione (GSSG), thereby acting as a backup for the glutathione redox system. Reduces nitroglutathione (GSNO), a compound involved in the transport of nitric oxide (NO). Also reduces oxidative stress by detoxifying hydrogen peroxide, tert-butyl hydroperoxide and cumene hydroperoxide. Activates ornithine aminotransferase OAT by reducing a disulfide bond in the substrate binding loop, thereby enhancing the affinity of OAT for its substrates. May reduce S-adenosyl-L-homocysteine hydrolase SAHH. This chain is Thioredoxin 1, found in Plasmodium falciparum (isolate 3D7).